A 113-amino-acid polypeptide reads, in one-letter code: UPF0102 protein Ccon26_01140 (113 aa).

It belongs to the UPF0102 family.

This Campylobacter concisus (strain 13826) protein is UPF0102 protein Ccon26_01140.